The chain runs to 77 residues: EMBRYO SURROUNDING FACTOR 1-like protein 6 (77 aa).

The N-terminal stretch at 1–25 (MSPSHFAILFIIVISLVPLHGYANG) is a signal peptide. Intrachain disulfides connect Cys-38–Cys-53, Cys-43–Cys-72, Cys-51–Cys-68, and Cys-54–Cys-61.

It belongs to the MEG family.

This Arabidopsis thaliana (Mouse-ear cress) protein is EMBRYO SURROUNDING FACTOR 1-like protein 6 (ESFL6).